We begin with the raw amino-acid sequence, 482 residues long: Glycogen synthase (482 aa).

K18 contributes to the ADP-alpha-D-glucose binding site.

It belongs to the glycosyltransferase 1 family. Bacterial/plant glycogen synthase subfamily.

The enzyme catalyses [(1-&gt;4)-alpha-D-glucosyl](n) + ADP-alpha-D-glucose = [(1-&gt;4)-alpha-D-glucosyl](n+1) + ADP + H(+). It participates in glycan biosynthesis; glycogen biosynthesis. In terms of biological role, synthesizes alpha-1,4-glucan chains using ADP-glucose. The sequence is that of Glycogen synthase from Rhodopseudomonas palustris (strain HaA2).